The primary structure comprises 66 residues: Potassium channel toxin alpha-KTx 30.1 (66 aa).

Residues 1–24 form the signal peptide; the sequence is MNTGFFFFVIMATGLVLTFDTIHA. 3 disulfide bridges follow: Cys30-Cys50, Cys36-Cys55, and Cys40-Cys57.

Belongs to the short scorpion toxin superfamily. Potassium channel inhibitor family. Alpha-KTx 30 subfamily. As to expression, expressed by the venom gland.

Its subcellular location is the secreted. Its function is as follows. inhibits Kv1.3/KCNA3 channel (1 uM of the toxin inhibits currents by 64.1%). In Scorpiops margerisonae (Scorpion), this protein is Potassium channel toxin alpha-KTx 30.1.